We begin with the raw amino-acid sequence, 153 residues long: 6,7-dimethyl-8-ribityllumazine synthase (153 aa).

Residues Phe22, 56–58 (AFE), and 80–82 (AVI) each bind 5-amino-6-(D-ribitylamino)uracil. 85–86 (ST) provides a ligand contact to (2S)-2-hydroxy-3-oxobutyl phosphate. Residue His88 is the Proton donor of the active site. Residue Phe113 coordinates 5-amino-6-(D-ribitylamino)uracil. (2S)-2-hydroxy-3-oxobutyl phosphate is bound at residue Arg127.

This sequence belongs to the DMRL synthase family.

It carries out the reaction (2S)-2-hydroxy-3-oxobutyl phosphate + 5-amino-6-(D-ribitylamino)uracil = 6,7-dimethyl-8-(1-D-ribityl)lumazine + phosphate + 2 H2O + H(+). It participates in cofactor biosynthesis; riboflavin biosynthesis; riboflavin from 2-hydroxy-3-oxobutyl phosphate and 5-amino-6-(D-ribitylamino)uracil: step 1/2. Functionally, catalyzes the formation of 6,7-dimethyl-8-ribityllumazine by condensation of 5-amino-6-(D-ribitylamino)uracil with 3,4-dihydroxy-2-butanone 4-phosphate. This is the penultimate step in the biosynthesis of riboflavin. The protein is 6,7-dimethyl-8-ribityllumazine synthase of Clostridium botulinum (strain Alaska E43 / Type E3).